Reading from the N-terminus, the 72-residue chain is Translation initiation factor IF-1 (72 aa).

Positions 1–72 (MAKEEAIEVE…TRGRIIFRER (72 aa)) constitute an S1-like domain.

The protein belongs to the IF-1 family. In terms of assembly, component of the 30S ribosomal translation pre-initiation complex which assembles on the 30S ribosome in the order IF-2 and IF-3, IF-1 and N-formylmethionyl-tRNA(fMet); mRNA recruitment can occur at any time during PIC assembly.

Its subcellular location is the cytoplasm. Its function is as follows. One of the essential components for the initiation of protein synthesis. Stabilizes the binding of IF-2 and IF-3 on the 30S subunit to which N-formylmethionyl-tRNA(fMet) subsequently binds. Helps modulate mRNA selection, yielding the 30S pre-initiation complex (PIC). Upon addition of the 50S ribosomal subunit IF-1, IF-2 and IF-3 are released leaving the mature 70S translation initiation complex. This is Translation initiation factor IF-1 from Treponema denticola (strain ATCC 35405 / DSM 14222 / CIP 103919 / JCM 8153 / KCTC 15104).